Reading from the N-terminus, the 453-residue chain is Bifunctional protein GlmU (453 aa).

A pyrophosphorylase region spans residues Met1–Lys225. Residues Leu6–Gly9, Lys20, Gln71, Gly76–Thr77, Tyr98–Asp100, Gly135, Glu150, Asn165, and Asn223 contribute to the UDP-N-acetyl-alpha-D-glucosamine site. Asp100 provides a ligand contact to Mg(2+). Asn223 contacts Mg(2+). The tract at residues Ala226–Glu246 is linker. Positions Gly247–Ser453 are N-acetyltransferase. Residues Arg329 and Lys347 each contribute to the UDP-N-acetyl-alpha-D-glucosamine site. The Proton acceptor role is filled by His359. UDP-N-acetyl-alpha-D-glucosamine is bound by residues Tyr362 and Asn373. Residues Ala376, Asn382–Tyr383, Ser401, and Ala419 each bind acetyl-CoA.

This sequence in the N-terminal section; belongs to the N-acetylglucosamine-1-phosphate uridyltransferase family. The protein in the C-terminal section; belongs to the transferase hexapeptide repeat family. As to quaternary structure, homotrimer. Mg(2+) is required as a cofactor.

The protein localises to the cytoplasm. It carries out the reaction alpha-D-glucosamine 1-phosphate + acetyl-CoA = N-acetyl-alpha-D-glucosamine 1-phosphate + CoA + H(+). The enzyme catalyses N-acetyl-alpha-D-glucosamine 1-phosphate + UTP + H(+) = UDP-N-acetyl-alpha-D-glucosamine + diphosphate. Its pathway is nucleotide-sugar biosynthesis; UDP-N-acetyl-alpha-D-glucosamine biosynthesis; N-acetyl-alpha-D-glucosamine 1-phosphate from alpha-D-glucosamine 6-phosphate (route II): step 2/2. The protein operates within nucleotide-sugar biosynthesis; UDP-N-acetyl-alpha-D-glucosamine biosynthesis; UDP-N-acetyl-alpha-D-glucosamine from N-acetyl-alpha-D-glucosamine 1-phosphate: step 1/1. It participates in bacterial outer membrane biogenesis; LPS lipid A biosynthesis. Functionally, catalyzes the last two sequential reactions in the de novo biosynthetic pathway for UDP-N-acetylglucosamine (UDP-GlcNAc). The C-terminal domain catalyzes the transfer of acetyl group from acetyl coenzyme A to glucosamine-1-phosphate (GlcN-1-P) to produce N-acetylglucosamine-1-phosphate (GlcNAc-1-P), which is converted into UDP-GlcNAc by the transfer of uridine 5-monophosphate (from uridine 5-triphosphate), a reaction catalyzed by the N-terminal domain. The polypeptide is Bifunctional protein GlmU (Burkholderia vietnamiensis (strain G4 / LMG 22486) (Burkholderia cepacia (strain R1808))).